Reading from the N-terminus, the 420-residue chain is MSRSSPSGKGHSRMAEPRFNNPYFWPPPPTMPSQLDNLVLINKIKEQLMAEKIRPPHLPPTSASSQQPLLVPPAPAESSQAVMSLPKLQQVPGLHPQAVPQPDVALHARPATSTVTGLGLSTRTPSVSTSESSAGAGTGTGTSTPSTPTTTSQSRLIASSPTLISGITSPPLLDSIKTIQGHGLLGPPKSERGRKKIKAENPGGPPVLVVPYPILASGETAKEGKTYRCKVCPLTFFTKSEMQIHSKSHTEAKPHKCPHCSKSFANASYLAQHLRIHLGVKPYHCSYCDKSFRQLSHLQQHTRIHTGDRPYKCPHPGCEKAFTQLSNLQSHQRQHNKDKPYKCPNCYRAYSDSASLQIHLSAHAIKHAKAYCCSMCGRAYTSETYLMKHMSKHTVVEHLVSHHSPQRTESPGIPVRISLI.

Disordered stretches follow at residues methionine 1–proline 28, arginine 54–glutamine 80, and valine 115–arginine 155. A compositionally biased stretch (low complexity) spans serine 121–serine 154. A Phosphothreonine modification is found at threonine 162. Positions threonine 178–proline 202 are disordered. Lysine 198 participates in a covalent cross-link: Glycyl lysine isopeptide (Lys-Gly) (interchain with G-Cter in SUMO2). C2H2-type zinc fingers lie at residues tyrosine 227–histidine 249, histidine 255–histidine 277, tyrosine 283–histidine 305, tyrosine 311–histidine 335, tyrosine 341–histidine 363, and tyrosine 371–histidine 393. At serine 404 the chain carries Phosphoserine.

This sequence belongs to the krueppel C2H2-type zinc-finger protein family.

The protein localises to the nucleus. In terms of biological role, may be involved in transcriptional regulation. This chain is Zinc finger protein 362 (ZNF362), found in Homo sapiens (Human).